The sequence spans 112 residues: UPF0102 protein Cla_1413 (112 aa).

The protein belongs to the UPF0102 family.

This chain is UPF0102 protein Cla_1413, found in Campylobacter lari (strain RM2100 / D67 / ATCC BAA-1060).